The primary structure comprises 438 residues: Xylose isomerase (438 aa).

Catalysis depends on residues H102 and D105. Residues E233, E269, H272, D297, D308, D310, and D340 each coordinate Mg(2+).

This sequence belongs to the xylose isomerase family. Homotetramer. It depends on Mg(2+) as a cofactor.

It localises to the cytoplasm. It carries out the reaction alpha-D-xylose = alpha-D-xylulofuranose. The protein is Xylose isomerase of Solibacter usitatus (strain Ellin6076).